The following is a 181-amino-acid chain: Adenine phosphoribosyltransferase (181 aa).

It belongs to the purine/pyrimidine phosphoribosyltransferase family. In terms of assembly, homodimer.

It is found in the cytoplasm. It catalyses the reaction AMP + diphosphate = 5-phospho-alpha-D-ribose 1-diphosphate + adenine. It participates in purine metabolism; AMP biosynthesis via salvage pathway; AMP from adenine: step 1/1. Its function is as follows. Catalyzes a salvage reaction resulting in the formation of AMP, that is energically less costly than de novo synthesis. This is Adenine phosphoribosyltransferase from Chromohalobacter salexigens (strain ATCC BAA-138 / DSM 3043 / CIP 106854 / NCIMB 13768 / 1H11).